We begin with the raw amino-acid sequence, 578 residues long: Probable methylcrotonoyl-CoA carboxylase beta chain, mitochondrial (578 aa).

A mitochondrion-targeting transit peptide spans 1-29 (MIRLNWLFRSSSVLLRSQVRLLHVGDANV). Residues 48-305 (MASLVGDLRN…SATNSYNDQL (258 aa)) form the CoA carboxyltransferase N-terminal domain. The carboxyltransferase stretch occupies residues 48–570 (MASLVGDLRN…KAALNNAGQE (523 aa)). In terms of domain architecture, CoA carboxyltransferase C-terminal spans 321–570 (AVEEPRYDAE…KAALNNAGQE (250 aa)). Positions 355–388 (DGSRFTEFKKLYGETLVCGFAKLYGHTVGIVGNN) are acyl-CoA binding.

This sequence belongs to the AccD/PCCB family. Expressed in third instar larval ring gland (lateral and medial secretory cells and corpus cardiacum cells) and CNS.

The protein localises to the mitochondrion matrix. It carries out the reaction 3-methylbut-2-enoyl-CoA + hydrogencarbonate + ATP = 3-methyl-(2E)-glutaconyl-CoA + ADP + phosphate + H(+). The protein operates within amino-acid degradation; L-leucine degradation; (S)-3-hydroxy-3-methylglutaryl-CoA from 3-isovaleryl-CoA: step 2/3. Its function is as follows. Carboxyltransferase subunit of the 3-methylcrotonyl-CoA carboxylase, an enzyme that catalyzes the conversion of 3-methylcrotonyl-CoA to 3-methylglutaconyl-CoA, a critical step for leucine and isovaleric acid catabolism. Vital for adult survival. The chain is Probable methylcrotonoyl-CoA carboxylase beta chain, mitochondrial from Drosophila melanogaster (Fruit fly).